The following is a 428-amino-acid chain: Probable dual-specificity RNA methyltransferase RlmN 2 (428 aa).

Catalysis depends on Glu-142, which acts as the Proton acceptor. The Radical SAM core domain maps to 148 to 414 (FAGRATACVS…STVRQRRGID (267 aa)). An intrachain disulfide couples Cys-155 to Cys-419. Residues Cys-162, Cys-166, and Cys-169 each contribute to the [4Fe-4S] cluster site. The segment covering 207–228 (MRDPSPGREAGEKSRDEADRHR) has biased composition (basic and acidic residues). The interval 207–232 (MRDPSPGREAGEKSRDEADRHRAPPT) is disordered. Residues 244–245 (GE), Ser-276, 299–301 (SLH), and Asn-375 each bind S-adenosyl-L-methionine. Cys-419 acts as the S-methylcysteine intermediate in catalysis.

This sequence belongs to the radical SAM superfamily. RlmN family. [4Fe-4S] cluster is required as a cofactor.

It is found in the cytoplasm. It carries out the reaction adenosine(2503) in 23S rRNA + 2 reduced [2Fe-2S]-[ferredoxin] + 2 S-adenosyl-L-methionine = 2-methyladenosine(2503) in 23S rRNA + 5'-deoxyadenosine + L-methionine + 2 oxidized [2Fe-2S]-[ferredoxin] + S-adenosyl-L-homocysteine. The catalysed reaction is adenosine(37) in tRNA + 2 reduced [2Fe-2S]-[ferredoxin] + 2 S-adenosyl-L-methionine = 2-methyladenosine(37) in tRNA + 5'-deoxyadenosine + L-methionine + 2 oxidized [2Fe-2S]-[ferredoxin] + S-adenosyl-L-homocysteine. Its function is as follows. Specifically methylates position 2 of adenine 2503 in 23S rRNA and position 2 of adenine 37 in tRNAs. In Opitutus terrae (strain DSM 11246 / JCM 15787 / PB90-1), this protein is Probable dual-specificity RNA methyltransferase RlmN 2.